The chain runs to 481 residues: Arf-GAP domain and FG repeat-containing protein 2 (481 aa).

One can recognise an Arf-GAP domain in the interval 27-153; that stretch reads EVWCRRVREL…WYVPPDQVKG (127 aa). The segment at 47–70 adopts a C4-type zinc-finger fold; it reads CFECAQRGVTYVDITVGSFVCTTC. 3 disordered regions span residues 150–220, 271–309, and 431–481; these read QVKG…SVKK, SSVF…APAS, and QQNG…NPFL. The segment covering 157-166 has biased composition (polar residues); that stretch reads TKGSASTPVQ. The residue at position 173 (lysine 173) is an N6-acetyllysine. Composition is skewed to polar residues over residues 188–210, 283–298, and 454–481; these read VAAS…ARST, ASFQ…SQGT, and AGIS…NPFL.

As to quaternary structure, interacts with EPS15R.

This is Arf-GAP domain and FG repeat-containing protein 2 (AGFG2) from Homo sapiens (Human).